The chain runs to 111 residues: Putative splicing factor C222.18 (111 aa).

The RRM domain occupies 18-95; it reads HTLYIRNFGT…DIIFVEWAKS (78 aa).

It belongs to the splicing factor SR family.

The protein localises to the nucleus. In terms of biological role, has a role in pre-mRNA splicing where it is involved in spliceosome assembly. This Schizosaccharomyces pombe (strain 972 / ATCC 24843) (Fission yeast) protein is Putative splicing factor C222.18.